Here is a 162-residue protein sequence, read N- to C-terminus: MKCPFRVGQGFDVHALVPGRALIVGGVDIPFSAGLLGHSDADVLLHALTDALLGAAGLGDIGRLFPDTDPAHAGADSRVLLREAYARVKAAGWEAVNVDATLICRAPRILPHAPAMVVNIAADLGMDAAAINIKGKTTEKLGFTGRGEGIAAQVVALLARAD.

Residues Asp12 and His14 each coordinate a divalent metal cation. 4-CDP-2-C-methyl-D-erythritol 2-phosphate is bound by residues 12–14 and 38–39; these read DVH and HS. His46 lines the a divalent metal cation pocket. 4-CDP-2-C-methyl-D-erythritol 2-phosphate is bound by residues 60–62, 65–69, Phe143, and Arg146; these read DIG and FPDTD.

This sequence belongs to the IspF family. In terms of assembly, homotrimer. The cofactor is a divalent metal cation.

The enzyme catalyses 4-CDP-2-C-methyl-D-erythritol 2-phosphate = 2-C-methyl-D-erythritol 2,4-cyclic diphosphate + CMP. It participates in isoprenoid biosynthesis; isopentenyl diphosphate biosynthesis via DXP pathway; isopentenyl diphosphate from 1-deoxy-D-xylulose 5-phosphate: step 4/6. Functionally, involved in the biosynthesis of isopentenyl diphosphate (IPP) and dimethylallyl diphosphate (DMAPP), two major building blocks of isoprenoid compounds. Catalyzes the conversion of 4-diphosphocytidyl-2-C-methyl-D-erythritol 2-phosphate (CDP-ME2P) to 2-C-methyl-D-erythritol 2,4-cyclodiphosphate (ME-CPP) with a corresponding release of cytidine 5-monophosphate (CMP). This Azoarcus sp. (strain BH72) protein is 2-C-methyl-D-erythritol 2,4-cyclodiphosphate synthase.